The chain runs to 639 residues: Threonine--tRNA ligase (639 aa).

Residues Met-1–Thr-61 form the TGS domain. The catalytic stretch occupies residues Asp-239–Pro-536. Residues Cys-333, His-384, and His-513 each coordinate Zn(2+).

Belongs to the class-II aminoacyl-tRNA synthetase family. In terms of assembly, homodimer. The cofactor is Zn(2+).

The protein resides in the cytoplasm. It catalyses the reaction tRNA(Thr) + L-threonine + ATP = L-threonyl-tRNA(Thr) + AMP + diphosphate + H(+). Catalyzes the attachment of threonine to tRNA(Thr) in a two-step reaction: L-threonine is first activated by ATP to form Thr-AMP and then transferred to the acceptor end of tRNA(Thr). Also edits incorrectly charged L-seryl-tRNA(Thr). In Rubrobacter xylanophilus (strain DSM 9941 / JCM 11954 / NBRC 16129 / PRD-1), this protein is Threonine--tRNA ligase.